The following is a 140-amino-acid chain: Phosphoribosyl-AMP cyclohydrolase (140 aa).

Asp-85 contacts Mg(2+). Cys-86 lines the Zn(2+) pocket. Residues Asp-87 and Asp-89 each contribute to the Mg(2+) site. Residues Cys-102 and Cys-109 each contribute to the Zn(2+) site.

Belongs to the PRA-CH family. Homodimer. Mg(2+) is required as a cofactor. It depends on Zn(2+) as a cofactor.

The protein resides in the cytoplasm. The enzyme catalyses 1-(5-phospho-beta-D-ribosyl)-5'-AMP + H2O = 1-(5-phospho-beta-D-ribosyl)-5-[(5-phospho-beta-D-ribosylamino)methylideneamino]imidazole-4-carboxamide. It functions in the pathway amino-acid biosynthesis; L-histidine biosynthesis; L-histidine from 5-phospho-alpha-D-ribose 1-diphosphate: step 3/9. Catalyzes the hydrolysis of the adenine ring of phosphoribosyl-AMP. The polypeptide is Phosphoribosyl-AMP cyclohydrolase (Bradyrhizobium diazoefficiens (strain JCM 10833 / BCRC 13528 / IAM 13628 / NBRC 14792 / USDA 110)).